A 375-amino-acid polypeptide reads, in one-letter code: Aldehyde reductase FrzD (375 aa).

FMN is bound by residues alanine 61, glutamine 103, and histidine 171. The Proton donor role is filled by tyrosine 176. Positions 223, 294, and 319 each coordinate FMN.

The protein belongs to the NADH:flavin oxidoreductase/NADH oxidase family. The cofactor is FMN.

It catalyses the reaction (1S,4S)-4-[(4-hydroxyphenyl)methyl]-2,5-diazaspiro[bicyclo[3.2.1]octane-6,1'-cyclohexane]-2',5'-dien-4'-one + 2 NADPH + 2 H(+) = (1S,4S)-4-[(4-hydroxyphenyl)methyl]-2,5-diazaspiro[bicyclo[3.2.1]octane-6,1'-cyclohexan]-4'-one + 2 NADP(+). The protein operates within alkaloid biosynthesis; ergot alkaloid biosynthesis. Aldehyde reductase; part of the gene cluster that mediates the biosynthesis of the alkaloid (-)-FR901483, a potent immunosuppressant that shows efficacy in animal models and a probable inhibitor of purine nucleotide biosynthesis by targeting phosphoribosylpyrophosphate amidotransferase (PPAT). Within the pathway, FrzD reduces the dienone portion of the pathway intermediates to cyclohexanone. The biosynthesis of (-)-FR901483 starts with the condensation of two L-tyrosines to yield (S,S)-dityrosyl-piperazine. This process occurs in 3 steps with the non-canonical nonribosomal peptide synthetase FrzA catalyzing the reduction of L-tyrosine into L-tyrosinal, the spontaneous condensation of 2 L-tyrosinal units, and the subsequent reduction by the NmrA-like family domain-containing oxidoreductase FrzB. The cytochrome P450 monooxygenase FrzC then performs coupling between N10 and C1' to morph the piperazine into a 1,4-diazabicyclo[3.2.1]octane spiro-fused to a 2,5-cyclohexadienone. The dienone portion is further reduced to cyclohexanone by the flavin-dependent reductase FrzD. The methyltranserases (MTs) FrzE and FrzF are then involved in the methylation at the C10' amine and the C4 phenolic oxygen, respectively. The order of the two MTs appear to be interchangeable. Cleavage of the C9-N10' bond by the dioxygenase FrzG then leads to formation of a conjugated iminium. In addition to the oxidation of C9, an additional dehydrogenation between C7 and C8 can occur to give a likely shunt product. The next biosynthetic step is the intramolecular aldol condensation catalyzed by the newly identified aldolase FrzH to yield an aza-tricyclic product with the formation of a C9-C3' bond. The short-chain dehydrogenase/reductase FrzI then produces dephospho-(-)-FR901483 that is phosphorylated at C4'-OH into (-)-FR901483 by the phosphotransferase FrzJ. The only unassigned enzyme in the cluster is the second cytochrome P450 monooxygenase FrzL. The sequence is that of Aldehyde reductase FrzD from Cladobotryum sp.